The primary structure comprises 190 residues: Peptide deformylase (190 aa).

2 residues coordinate Fe cation: Cys94 and His136. Glu137 is an active-site residue. His140 contacts Fe cation.

This sequence belongs to the polypeptide deformylase family. Requires Fe(2+) as cofactor.

It carries out the reaction N-terminal N-formyl-L-methionyl-[peptide] + H2O = N-terminal L-methionyl-[peptide] + formate. In terms of biological role, removes the formyl group from the N-terminal Met of newly synthesized proteins. Requires at least a dipeptide for an efficient rate of reaction. N-terminal L-methionine is a prerequisite for activity but the enzyme has broad specificity at other positions. The chain is Peptide deformylase from Chlorobium phaeovibrioides (strain DSM 265 / 1930) (Prosthecochloris vibrioformis (strain DSM 265)).